The following is an 860-amino-acid chain: Leucine--tRNA ligase (860 aa).

Positions 42–52 (PYPSGRLHMGH) match the 'HIGH' region motif. The 'KMSKS' region motif lies at 619–623 (KMSKS). Residue Lys622 participates in ATP binding.

This sequence belongs to the class-I aminoacyl-tRNA synthetase family.

It localises to the cytoplasm. It carries out the reaction tRNA(Leu) + L-leucine + ATP = L-leucyl-tRNA(Leu) + AMP + diphosphate. The polypeptide is Leucine--tRNA ligase (Escherichia coli O9:H4 (strain HS)).